The following is a 647-amino-acid chain: Meiotically up-regulated protein C8C9.04 (647 aa).

Disordered stretches follow at residues 1-241 and 387-647; these read MTTN…ELKP and RAQQ…KLFH. Over residues 29–46 the composition is skewed to polar residues; the sequence is KSTNAVEQNNNSSQASVT. The segment covering 49-67 has biased composition (basic residues); it reads NKKKAAKRAKKKAAKKKKQ. Residues 92-103 show a composition bias toward polar residues; sequence TILQEPGFTQTI. Positions 134–145 are enriched in low complexity; sequence PSASTSTAVPTT. Residues 146–155 show a composition bias toward polar residues; that stretch reads EARNTSITEP. Residues 156–177 show a composition bias toward low complexity; the sequence is ANSPSSSSSSASTKSTATTQSA. 2 positions are modified to phosphoserine: S162 and S165. T168 is subject to Phosphothreonine. The span at 193 to 215 shows a compositional bias: polar residues; that stretch reads QLGNSPASITSKPATTSAAQPSS. S197 and S200 each carry phosphoserine. The span at 232–241 shows a compositional bias: basic and acidic residues; sequence AEKEIPELKP. Composition is skewed to polar residues over residues 390–406, 413–432, and 488–508; these read QPEQ…TETV, VSST…TESE, and PSST…AQSS. Position 396 is a phosphoserine (S396). Residues S489 and S490 each carry the phosphoserine modification. T491 is modified (phosphothreonine). A phosphoserine mark is found at S515, S519, and S523. The segment covering 518-530 has biased composition (low complexity); it reads ASAPSSPGTTSAA. Positions 561-589 are enriched in polar residues; the sequence is GSATTIPSPGSATTKPTPGSATTKPTPVS. The span at 596-613 shows a compositional bias: low complexity; that stretch reads AGTTKPAPAAGATATAEN. Positions 633 to 647 are enriched in basic residues; that stretch reads SWFKRMKKSFGKLFH.

Its function is as follows. Has a role in meiosis and sporulation. This is Meiotically up-regulated protein C8C9.04 from Schizosaccharomyces pombe (strain 972 / ATCC 24843) (Fission yeast).